The sequence spans 245 residues: NADH-quinone oxidoreductase subunit C (245 aa).

Residues 1 to 10 (MSAPQDRTDD) are compositionally biased toward basic and acidic residues. Disordered regions lie at residues 1–54 (MSAP…GYGG) and 216–245 (PQRK…RSYQ). The segment covering 11–28 (GGVPVPVTPAGATGGAPA) has biased composition (low complexity). The segment covering 39-54 (GMFGDQGTGDVSGYGG) has biased composition (gly residues).

The protein belongs to the complex I 30 kDa subunit family. NDH-1 is composed of 14 different subunits. Subunits NuoB, C, D, E, F, and G constitute the peripheral sector of the complex.

Its subcellular location is the cell membrane. The catalysed reaction is a quinone + NADH + 5 H(+)(in) = a quinol + NAD(+) + 4 H(+)(out). Its function is as follows. NDH-1 shuttles electrons from NADH, via FMN and iron-sulfur (Fe-S) centers, to quinones in the respiratory chain. The immediate electron acceptor for the enzyme in this species is believed to be a menaquinone. Couples the redox reaction to proton translocation (for every two electrons transferred, four hydrogen ions are translocated across the cytoplasmic membrane), and thus conserves the redox energy in a proton gradient. This Salinispora tropica (strain ATCC BAA-916 / DSM 44818 / JCM 13857 / NBRC 105044 / CNB-440) protein is NADH-quinone oxidoreductase subunit C.